The chain runs to 279 residues: Acetyl-coenzyme A carboxylase carboxyl transferase subunit beta (279 aa).

One can recognise a CoA carboxyltransferase N-terminal domain in the interval 23–279; the sequence is LWWKCEECGA…IVRLAGMLKV (257 aa). Cys27, Cys30, Cys46, and Cys49 together coordinate Zn(2+). The C4-type zinc finger occupies 27-49; sequence CEECGAMIHKKQLEDHVYTCSDC.

The protein belongs to the AccD/PCCB family. In terms of assembly, acetyl-CoA carboxylase is a heterohexamer composed of biotin carboxyl carrier protein (AccB), biotin carboxylase (AccC) and two subunits each of ACCase subunit alpha (AccA) and ACCase subunit beta (AccD). The cofactor is Zn(2+).

It is found in the cytoplasm. It carries out the reaction N(6)-carboxybiotinyl-L-lysyl-[protein] + acetyl-CoA = N(6)-biotinyl-L-lysyl-[protein] + malonyl-CoA. It participates in lipid metabolism; malonyl-CoA biosynthesis; malonyl-CoA from acetyl-CoA: step 1/1. Functionally, component of the acetyl coenzyme A carboxylase (ACC) complex. Biotin carboxylase (BC) catalyzes the carboxylation of biotin on its carrier protein (BCCP) and then the CO(2) group is transferred by the transcarboxylase to acetyl-CoA to form malonyl-CoA. The polypeptide is Acetyl-coenzyme A carboxylase carboxyl transferase subunit beta (Chlorobium limicola (strain DSM 245 / NBRC 103803 / 6330)).